Consider the following 112-residue polypeptide: Large ribosomal subunit protein eL30x (112 aa).

The protein belongs to the eukaryotic ribosomal protein eL30 family.

This is Large ribosomal subunit protein eL30x (RPL30C) from Arabidopsis thaliana (Mouse-ear cress).